The chain runs to 551 residues: Calcium-dependent protein kinase 19 (551 aa).

Gly2 carries the N-myristoyl glycine lipid modification. The interval 12–46 (VKKPTPDISGEQNTEVKSREITPKEQPRQRQPAPR) is disordered. Residues 25 to 39 (TEVKSREITPKEQPR) are compositionally biased toward basic and acidic residues. Residues 98-357 (YSLGRELGRG…AAQVLEHPWI (260 aa)) enclose the Protein kinase domain. Residues 104–112 (LGRGQFGIT) and Lys127 contribute to the ATP site. Residue Asp222 is the Proton acceptor of the active site. Ser263 carries the phosphoserine modification. Residues 363–393 (ASDKPIDSAVLSRMKQLRAMNKLKKLAFKFI) form an autoinhibitory domain region. EF-hand domains follow at residues 400 to 435 (EELK…LGSR), 436 to 471 (LTET…RFRV), 472 to 507 (ERED…YNMG), and 512 to 542 (IKEI…CSQS). Asp413, Asp415, Ser417, Thr419, Glu424, Asp449, Asp451, Asn453, Thr455, Glu460, Asp485, Asp487, Ser489, Glu496, Asp520, Asp522, Asp524, Ser526, and Glu531 together coordinate Ca(2+).

This sequence belongs to the protein kinase superfamily. Ser/Thr protein kinase family. CDPK subfamily.

The protein resides in the membrane. It catalyses the reaction L-seryl-[protein] + ATP = O-phospho-L-seryl-[protein] + ADP + H(+). The catalysed reaction is L-threonyl-[protein] + ATP = O-phospho-L-threonyl-[protein] + ADP + H(+). With respect to regulation, activated by calcium. Autophosphorylation may play an important role in the regulation of the kinase activity. May play a role in signal transduction pathways that involve calcium as a second messenger. The chain is Calcium-dependent protein kinase 19 (CPK19) from Arabidopsis thaliana (Mouse-ear cress).